We begin with the raw amino-acid sequence, 1567 residues long: Putative DEAH-box ATP-dependent helicase UM11114 (1567 aa).

Disordered stretches follow at residues 1–95 (MAPR…PGSK) and 670–734 (ESSV…ETRR). Polar residues predominate over residues 10 to 20 (IKSSGTTSSKA). Composition is skewed to low complexity over residues 39 to 48 (TKAAKQQQTQ) and 55 to 73 (AISA…AASS). Residues 74–83 (AGGGGGGGQG) are compositionally biased toward gly residues. Polar residues-rich tracts occupy residues 670-687 (ESSV…TPTG) and 713-726 (LQRQ…SPSY). The Helicase ATP-binding domain maps to 746–924 (LGLIRSNRVV…FGKAPCISIP (179 aa)). ATP is bound at residue 759–766 (GETGCGKT). Residues 871-874 (DEVH) carry the DEAH box motif. The region spanning 1003 to 1184 (VVRYVVERAE…SLFLEVKSMR (182 aa)) is the Helicase C-terminal domain.

It belongs to the DEAD box helicase family. DEAH subfamily.

The chain is Putative DEAH-box ATP-dependent helicase UM11114 from Mycosarcoma maydis (Corn smut fungus).